The following is a 210-amino-acid chain: UPF0301 protein OCAR_7326/OCA5_c07920 (210 aa).

The protein belongs to the UPF0301 (AlgH) family.

The protein is UPF0301 protein OCAR_7326/OCA5_c07920 of Afipia carboxidovorans (strain ATCC 49405 / DSM 1227 / KCTC 32145 / OM5) (Oligotropha carboxidovorans).